A 579-amino-acid chain; its full sequence is Protein O-linked-mannose beta-1,4-N-acetylglucosaminyltransferase 2 (579 aa).

At 1-4 (MGVG) the chain is on the cytoplasmic side. The chain crosses the membrane as a helical; Signal-anchor for type II membrane protein span at residues 5-25 (TLLNGLLVSVVAALLWKYSKL). The Lumenal segment spans residues 26 to 579 (SEHAALLEEE…PFADVLMCRT (554 aa)). 3 N-linked (GlcNAc...) asparagine glycosylation sites follow: Asn-98, Asn-275, and Asn-542. The Fibronectin type-III domain maps to 480 to 579 (HPGRVRDARC…PFADVLMCRT (100 aa)).

It belongs to the glycosyltransferase 61 family.

The protein resides in the endoplasmic reticulum membrane. The enzyme catalyses 3-O-(alpha-D-mannosyl)-L-threonyl-[protein] + UDP-N-acetyl-alpha-D-glucosamine = 3-O-(N-acetyl-beta-D-glucosaminyl-(1-&gt;4)-alpha-D-mannosyl)-L-threonyl-[protein] + UDP + H(+). It functions in the pathway protein modification; protein glycosylation. O-linked mannose beta-1,4-N-acetylglucosaminyltransferase that transfers UDP-N-acetyl-D-glucosamine to the 4-position of the mannose to generate N-acetyl-D-glucosamine-beta-1,4-O-D-mannosylprotein. Involved in the biosynthesis of the phosphorylated O-mannosyl trisaccharide (N-acetylgalactosamine-beta-3-N-acetylglucosamine-beta-4-(phosphate-6-)mannose), a carbohydrate structure present in alpha-dystroglycan (DAG1), which is required for binding laminin G-like domain-containing extracellular proteins with high affinity. The polypeptide is Protein O-linked-mannose beta-1,4-N-acetylglucosaminyltransferase 2 (pomgnt2) (Tetraodon nigroviridis (Spotted green pufferfish)).